A 378-amino-acid chain; its full sequence is Cobalt-precorrin-5B C(1)-methyltransferase (378 aa).

It belongs to the CbiD family.

The catalysed reaction is Co-precorrin-5B + S-adenosyl-L-methionine = Co-precorrin-6A + S-adenosyl-L-homocysteine. Its pathway is cofactor biosynthesis; adenosylcobalamin biosynthesis; cob(II)yrinate a,c-diamide from sirohydrochlorin (anaerobic route): step 6/10. Catalyzes the methylation of C-1 in cobalt-precorrin-5B to form cobalt-precorrin-6A. The protein is Cobalt-precorrin-5B C(1)-methyltransferase of Tolumonas auensis (strain DSM 9187 / NBRC 110442 / TA 4).